The primary structure comprises 852 residues: RNA-binding protein 10 (852 aa).

2 stretches are compositionally biased toward basic and acidic residues: residues 1 to 14 and 21 to 45; these read MEYE…DRTG and RSQD…RSYP. Positions 1–78 are disordered; it reads MEYERRGGRG…RGQLQSHGVQ (78 aa). In terms of domain architecture, RRM 1 spans 37 to 132; sequence RDMDYRSYPR…QKVSMHYSDP (96 aa). At serine 61 the chain carries Phosphoserine. The RanBP2-type zinc-finger motif lies at 135–165; it reads KINEDWLCNKCGVQNFKRREKCFKCGVPKSE. The 85-residue stretch at 223 to 307 folds into the RRM 2 domain; it reads DTIILRNLNP…KTINVEFAKG (85 aa). The residue at position 306 (lysine 306) is an N6-acetyllysine. Disordered regions lie at residues 343 to 365, 386 to 410, 426 to 446, 459 to 489, 542 to 568, and 634 to 675; these read GGES…QQDE, KGPG…EGGT, APGL…ATNS, SELQ…YPVP, EQSA…HKTK, and DLPK…EEKL. The segment covering 430 to 446 has biased composition (polar residues); sequence YQQSAEGSSGQGTATNS. Over residues 463–484 the composition is skewed to low complexity; the sequence is SPTHPSSALPPATSPTAPESYS. Basic and acidic residues predominate over residues 545 to 561; sequence ADGHKDTGASSKEGKEK. Serine 640, serine 645, serine 655, serine 658, and serine 660 each carry phosphoserine. Over residues 665–675 the composition is skewed to basic and acidic residues; sequence ERGGPEREEKL. The segment at 681–706 adopts a C2H2-type; atypical zinc-finger fold; sequence LACLLCRRQFPSKEALIRHQQLSGLH. 3 positions are modified to phosphoserine: serine 703, serine 719, and serine 767. The segment at 740-783 is disordered; the sequence is AAERREKYGIPEPPEPKRRKYGGISTASVDFEQPTRDGLGSDNI. A G-patch domain is found at 780-826; it reads SDNIGSRMLQAMGWKEGSGLGRKKQGIVTPIEAQTRVRGSGLGARGS. Arginine 824 bears the Omega-N-methylarginine mark.

As to quaternary structure, associates with the spliceosome. Component of a large chromatin remodeling complex, at least composed of MYSM1, PCAF, RBM10 and KIF11/TRIP5.

It localises to the nucleus. Functionally, binds to ssRNA containing the consensus sequence 5'-AGGUAA-3'. May be involved in post-transcriptional processing, most probably in mRNA splicing. Binds to RNA homopolymers, with a preference for poly(G) and poly(U) and little for poly(A). May bind to specific miRNA hairpins. The polypeptide is RNA-binding protein 10 (Rattus norvegicus (Rat)).